A 185-amino-acid chain; its full sequence is Capsid protein (185 aa).

Positions 136 to 185 (NAPILSTLPETTVVRRRDRGRSPRRRTPSPRRRRSQSPRRRRSQSRESQC) are disordered. Residues 149 to 178 (VRRRDRGRSPRRRTPSPRRRRSQSPRRRRS) show a composition bias toward basic residues. Phosphoserine; by host occurs at positions 157, 164, and 172. Residues 157–163 (SPRRRTP) form a 1; half-length repeat. Residues 157–179 (SPRRRTPSPRRRRSQSPRRRRSQ) are 3 X 8 AA repeats of S-P-R-R-R-[PR]-S-Q. The short motif at 160–177 (RRTPSPRRRRSQSPRRRR) is the Bipartite nuclear localization signal element. Tandem repeats lie at residues 164 to 171 (SPRRRRSQ) and 172 to 179 (SPRRRRSQ). Residues 179–185 (QSRESQC) are RNA binding.

Belongs to the orthohepadnavirus core antigen family. Homodimerizes, then multimerizes. Interacts with cytosol exposed regions of viral L glycoprotein present in the reticulum-to-Golgi compartment. Interacts with human FLNB. Phosphorylated form interacts with host importin alpha; this interaction depends on the exposure of the NLS, which itself depends upon genome maturation and/or phosphorylation of the capsid protein. Interacts with host NUP153. Post-translationally, phosphorylated by host SRPK1, SRPK2, and maybe protein kinase C or GAPDH. Phosphorylation is critical for pregenomic RNA packaging. Protein kinase C phosphorylation is stimulated by HBx protein and may play a role in transport of the viral genome to the nucleus at the late step during the viral replication cycle.

It is found in the virion. Its subcellular location is the host cytoplasm. In terms of biological role, self assembles to form an icosahedral capsid. Most capsids appear to be large particles with an icosahedral symmetry of T=4 and consist of 240 copies of capsid protein, though a fraction forms smaller T=3 particles consisting of 180 capsid proteins. Entering capsids are transported along microtubules to the nucleus. Phosphorylation of the capsid is thought to induce exposure of nuclear localization signal in the C-terminal portion of the capsid protein that allows binding to the nuclear pore complex via the importin (karyopherin-) alpha and beta. Capsids are imported in intact form through the nuclear pore into the nuclear basket, where it probably binds NUP153. Only capsids that contain the mature viral genome can release the viral DNA and capsid protein into the nucleoplasm. Immature capsids get stuck in the basket. Capsids encapsulate the pre-genomic RNA and the P protein. Pre-genomic RNA is reverse-transcribed into DNA while the capsid is still in the cytoplasm. The capsid can then either be directed to the nucleus, providing more genomes for transcription, or bud through the endoplasmic reticulum to provide new virions. This chain is Capsid protein, found in Homo sapiens (Human).